Consider the following 450-residue polypeptide: Cytochrome c1 (450 aa).

The N-terminal stretch at 1 to 21 (MTLRNASLTAVAALTVALAGG) is a signal peptide. Residues 24–58 (AQDASTAPGTTAPAGSSYHTNEAAPAAADTAPAAE) show a composition bias toward low complexity. Residues 24 to 210 (AQDASTAPGT…AAAQEAGDSH (187 aa)) are disordered. 3 stretches are compositionally biased toward acidic residues: residues 59-77 (AADEPAAEEAEAGEAEVTE), 85-108 (PAEEPAADEPAATEEPDAEAEPAA), and 118-194 (APAE…EDEA). Residues Cys-245, Cys-248, and His-249 each coordinate heme c. The disordered stretch occupies residues 284–305 (PETEEDRPRVPTDHFPTVSGEG). A heme c-binding site is contributed by Met-373. The chain crosses the membrane as a helical span at residues 421-435 (SVIFLIVLAALLYLT).

As to quaternary structure, the main subunits of complex b-c1 are: cytochrome b, cytochrome c1 and the Rieske protein. In terms of processing, binds 1 heme c group covalently per subunit.

Its subcellular location is the cell membrane. Component of the ubiquinol-cytochrome c reductase complex (complex III or cytochrome b-c1 complex), which is a respiratory chain that generates an electrochemical potential coupled to ATP synthesis. c1 functions as an electron donor to cytochrome c. In Paracoccus denitrificans, this protein is Cytochrome c1 (petC).